A 503-amino-acid polypeptide reads, in one-letter code: SWI/SNF and RSC complexes subunit ssr2 (503 aa).

Residues I18–A115 enclose the SWIRM domain. S175 carries the post-translational modification Phosphoserine. A ZZ-type; degenerate zinc finger spans residues R188–F242. Zn(2+)-binding residues include C193, C196, C216, and C219. The region spanning D245–P296 is the SANT domain. The residue at position 306 (S306) is a Phosphoserine.

This sequence belongs to the SMARCC family. Component of the RSC complex composed of at least arp9, arp42, rsc1, rsc4, rsc7, rsc9, rsc58, sfh1, snf21, ssr1, ssr2, ssr3 and ssr4. The complex interacts with histone and histone variant components of centromeric chromatin. Component of the SWI/SNF global transcription activator complex composed of at least arp9, arp42, snf5, snf22, snf30, sbf59, sol1, ssr1, ssr2, ssr3, ssr4 and tfg3.

Its subcellular location is the cytoplasm. It is found in the nucleus. Functionally, component of the chromatin structure remodeling complex (RSC), which is involved in transcription regulation and nucleosome positioning. Controls particularly membrane and organelle development genes. Part of the SWI/SNF complex, an ATP-dependent chromatin remodeling complex, required for the positive and negative regulation of gene expression of a large number of genes. It changes chromatin structure by altering DNA-histone contacts within a nucleosome, leading eventually to a change in nucleosome position, thus facilitating or repressing binding of gene-specific transcription factors. The protein is SWI/SNF and RSC complexes subunit ssr2 (ssr2) of Schizosaccharomyces pombe (strain 972 / ATCC 24843) (Fission yeast).